Reading from the N-terminus, the 482-residue chain is UDP-N-acetylmuramate--L-alanine ligase (482 aa).

Residues methionine 1–glutamine 26 are disordered. Glycine 140–threonine 146 provides a ligand contact to ATP.

It belongs to the MurCDEF family.

It is found in the cytoplasm. The catalysed reaction is UDP-N-acetyl-alpha-D-muramate + L-alanine + ATP = UDP-N-acetyl-alpha-D-muramoyl-L-alanine + ADP + phosphate + H(+). Its pathway is cell wall biogenesis; peptidoglycan biosynthesis. Functionally, cell wall formation. The sequence is that of UDP-N-acetylmuramate--L-alanine ligase from Deinococcus radiodurans (strain ATCC 13939 / DSM 20539 / JCM 16871 / CCUG 27074 / LMG 4051 / NBRC 15346 / NCIMB 9279 / VKM B-1422 / R1).